Consider the following 266-residue polypeptide: 4-hydroxy-tetrahydrodipicolinate reductase (266 aa).

Residues 7-12 (GTIGRM), E33, 96-98 (GTT), and 120-123 (APNM) each bind NAD(+). H153 functions as the Proton donor/acceptor in the catalytic mechanism. Residue H154 participates in (S)-2,3,4,5-tetrahydrodipicolinate binding. Catalysis depends on K157, which acts as the Proton donor. A (S)-2,3,4,5-tetrahydrodipicolinate-binding site is contributed by 163–164 (GT).

The protein belongs to the DapB family.

It is found in the cytoplasm. It carries out the reaction (S)-2,3,4,5-tetrahydrodipicolinate + NAD(+) + H2O = (2S,4S)-4-hydroxy-2,3,4,5-tetrahydrodipicolinate + NADH + H(+). It catalyses the reaction (S)-2,3,4,5-tetrahydrodipicolinate + NADP(+) + H2O = (2S,4S)-4-hydroxy-2,3,4,5-tetrahydrodipicolinate + NADPH + H(+). Its pathway is amino-acid biosynthesis; L-lysine biosynthesis via DAP pathway; (S)-tetrahydrodipicolinate from L-aspartate: step 4/4. Its function is as follows. Catalyzes the conversion of 4-hydroxy-tetrahydrodipicolinate (HTPA) to tetrahydrodipicolinate. This chain is 4-hydroxy-tetrahydrodipicolinate reductase, found in Polynucleobacter necessarius subsp. necessarius (strain STIR1).